The chain runs to 80 residues: Exodeoxyribonuclease 7 small subunit (80 aa).

The protein belongs to the XseB family. Heterooligomer composed of large and small subunits.

The protein localises to the cytoplasm. It catalyses the reaction Exonucleolytic cleavage in either 5'- to 3'- or 3'- to 5'-direction to yield nucleoside 5'-phosphates.. Functionally, bidirectionally degrades single-stranded DNA into large acid-insoluble oligonucleotides, which are then degraded further into small acid-soluble oligonucleotides. This chain is Exodeoxyribonuclease 7 small subunit, found in Erwinia tasmaniensis (strain DSM 17950 / CFBP 7177 / CIP 109463 / NCPPB 4357 / Et1/99).